A 572-amino-acid chain; its full sequence is Enolase 4 (572 aa).

Residues 181–204 (IEPVPSPVTSPALGKKKGSGKGKK) are disordered. The segment covering 194–204 (GKKKGSGKGKK) has biased composition (basic residues). Position 288 (Glu288) interacts with substrate. The active-site Proton acceptor is Lys468. Residue Lys519 participates in substrate binding.

This sequence belongs to the enolase family.

The catalysed reaction is (2R)-2-phosphoglycerate = phosphoenolpyruvate + H2O. It participates in carbohydrate degradation; glycolysis; pyruvate from D-glyceraldehyde 3-phosphate: step 4/5. This is Enolase 4 (eno4) from Xenopus laevis (African clawed frog).